Reading from the N-terminus, the 426-residue chain is Serine--tRNA ligase (426 aa).

233 to 235 (TSE) is an L-serine binding site. 264–266 (RSE) is a binding site for ATP. Glu287 provides a ligand contact to L-serine. Residue 351-354 (EISS) coordinates ATP. Ser387 lines the L-serine pocket.

Belongs to the class-II aminoacyl-tRNA synthetase family. Type-1 seryl-tRNA synthetase subfamily. As to quaternary structure, homodimer. The tRNA molecule binds across the dimer.

It is found in the cytoplasm. The enzyme catalyses tRNA(Ser) + L-serine + ATP = L-seryl-tRNA(Ser) + AMP + diphosphate + H(+). The catalysed reaction is tRNA(Sec) + L-serine + ATP = L-seryl-tRNA(Sec) + AMP + diphosphate + H(+). The protein operates within aminoacyl-tRNA biosynthesis; selenocysteinyl-tRNA(Sec) biosynthesis; L-seryl-tRNA(Sec) from L-serine and tRNA(Sec): step 1/1. Catalyzes the attachment of serine to tRNA(Ser). Is also able to aminoacylate tRNA(Sec) with serine, to form the misacylated tRNA L-seryl-tRNA(Sec), which will be further converted into selenocysteinyl-tRNA(Sec). The sequence is that of Serine--tRNA ligase from Colwellia psychrerythraea (strain 34H / ATCC BAA-681) (Vibrio psychroerythus).